The sequence spans 481 residues: MDNHNEVPMSMSVPWASAASVTCLSLDAKCHRPCPSSISASASASACASDSAAIATTKLRHIAYTQRCSSRLTMLMTVLLLLLPLSFTPAHSCGPGRGLGRRRERNLYPLVLKQTIPNLSEYQTGASGPLEGEIKRDSPKFKDLVPNYNRDILFRDEEGTGADRLMTKRCKEKLNVLAYSVMNEWPGVRLLVTESWDEDHQHGQESLHYEGRAVTIATSDREPSRYGMLARLAVEAGFDWVSYVSRRHIYCSVKSDSSISSHVHGCFTPESTALLESGITKPLSEISIGDRVLSMGSNGQPVYSEVILFMDRNLEQMQNFVELHTDGGAVLTVTPAHLISVWHPERQQLDYVFADRVEELNYVLVRDPQTGELRPQRVVRVGSVRSKGVVAPLTREGTIVVNSVAASCYAVIDSQSLAHWGLAPMRILAMLQSWMPAKDQLRSSQTEGVVSRAEQQNGIHWYANALYKVKDYVLPKSWRHD.

The N-palmitoyl cysteine moiety is linked to residue Cys93. Ca(2+) is bound by residues Glu157, Glu158, Asp163, Thr193, Glu194, Asp197, and Asp199. Residue Gly265 is the site of Cholesterol glycine ester attachment.

It belongs to the hedgehog family. Interacts with shf. Post-translationally, the C-terminal part of the hedgehog protein precursor displays an autoproteolysis activity that results in the cleavage of the full-length protein into two parts (N-product and C-product). In addition, the C-terminal part displays a cholesterol transferase activity that results by the covalent attachment of a cholesterol moiety to the C-terminal of the newly generated N-product. The N-product is the active species in both local and long-range signaling, whereas the C-product has no signaling activity. In terms of processing, cholesterylation is required for N-product targeting to lipid rafts and multimerization. N-palmitoylation by Rasp of the hedgehog N-product, within the secretory pathway, is required for the embryonic and larval patterning activities of the hedgehog signal.

The protein localises to the nucleus. It localises to the cytoplasm. The protein resides in the cell membrane. The catalysed reaction is glycyl-L-cysteinyl-[protein] + cholesterol + H(+) = [protein]-C-terminal glycyl cholesterol ester + N-terminal L-cysteinyl-[protein]. The C-terminal part of the hedgehog protein precursor displays an autoproteolysis activity that results in the cleavage of the full-length protein into two parts (N-product and C-product). In addition, the C-terminal part displays a cholesterol transferase activity that results by the covalent attachment of a cholesterol moiety to the C-terminal of the newly generated N-product. Once cleaved, the C-product has no signaling activity and diffuses from the cell. In terms of biological role, the dually lipidated hedgehog protein N-product is a morphogen which is essential for a variety of patterning events during development. Establishes the anterior-posterior axis of the embryonic segments and patterns the larval imaginal disks. Binds to the patched (ptc) receptor, which functions in association with smoothened (smo), to activate the transcription of target genes wingless (wg), decapentaplegic (dpp) and ptc. In the absence of hh, ptc represses the constitutive signaling activity of smo through fused (fu). Essential component of a signaling pathway which regulates the Duox-dependent gut immune response to bacterial uracil; required to activate Cad99C-dependent endosome formation, norpA-dependent Ca2+ mobilization and p38 MAPK, which are essential steps in the Duox-dependent production of reactive oxygen species (ROS) in response to intestinal bacterial infection. During photoreceptor differentiation, it up-regulates transcription of Ubr3, which in turn promotes the hh-signaling pathway by mediating the ubiquitination and degradation of cos. The chain is Protein hedgehog (hh-1) from Drosophila pseudoobscura pseudoobscura (Fruit fly).